A 159-amino-acid chain; its full sequence is MNISIISVGKIKEKFLKAAIDEYSKRLSKYCKLNIIEVADEKTPDNASLKEENIIKEKEGNLILKHIKDNSFVIALDLKGKSITSEEFSDLIENCRLTGNSTIAFVIGGSLGLSEQVLSRANYKLSFSKMTFPHQLFRVMLLEQVYRAFRILCGEPYHK.

Residues Leu-76, Gly-108, and 127 to 132 (FSKMTF) each bind S-adenosyl-L-methionine.

This sequence belongs to the RNA methyltransferase RlmH family. As to quaternary structure, homodimer.

It is found in the cytoplasm. The enzyme catalyses pseudouridine(1915) in 23S rRNA + S-adenosyl-L-methionine = N(3)-methylpseudouridine(1915) in 23S rRNA + S-adenosyl-L-homocysteine + H(+). Functionally, specifically methylates the pseudouridine at position 1915 (m3Psi1915) in 23S rRNA. The sequence is that of Ribosomal RNA large subunit methyltransferase H from Clostridium botulinum (strain Kyoto / Type A2).